The chain runs to 368 residues: Transaldolase (368 aa).

Catalysis depends on Lys140, which acts as the Schiff-base intermediate with substrate.

This sequence belongs to the transaldolase family. Type 2 subfamily.

It localises to the cytoplasm. It carries out the reaction D-sedoheptulose 7-phosphate + D-glyceraldehyde 3-phosphate = D-erythrose 4-phosphate + beta-D-fructose 6-phosphate. The protein operates within carbohydrate degradation; pentose phosphate pathway; D-glyceraldehyde 3-phosphate and beta-D-fructose 6-phosphate from D-ribose 5-phosphate and D-xylulose 5-phosphate (non-oxidative stage): step 2/3. Functionally, transaldolase is important for the balance of metabolites in the pentose-phosphate pathway. The polypeptide is Transaldolase (Thermobifida fusca (strain YX)).